Here is a 543-residue protein sequence, read N- to C-terminus: Cytochrome P450 monooxygenase 205 (543 aa).

A helical membrane pass occupies residues 9-29; that stretch reads LISLGVAALAVAVWKAIVMVI. 2 N-linked (GlcNAc...) asparagine glycosylation sites follow: Asn332 and Asn434. Residue Cys479 participates in heme binding.

Belongs to the cytochrome P450 family. Heme is required as a cofactor.

Its subcellular location is the membrane. The protein operates within secondary metabolite biosynthesis. In terms of biological role, cytochrome P450 monooxygenase that is able to use carbazole and phenanthrene as substrates for oxidation. In Postia placenta (strain ATCC 44394 / Madison 698-R) (Brown rot fungus), this protein is Cytochrome P450 monooxygenase 205.